The primary structure comprises 393 residues: 5-amino-6-(D-ribitylamino)uracil--L-tyrosine 4-hydroxyphenyl transferase (393 aa).

One can recognise a Radical SAM core domain in the interval Val-71 to Asn-318. Cys-85, Cys-89, and Cys-92 together coordinate [4Fe-4S] cluster.

This sequence belongs to the radical SAM superfamily. CofH family. As to quaternary structure, consists of two subunits, CofG and CofH. [4Fe-4S] cluster is required as a cofactor.

The catalysed reaction is 5-amino-6-(D-ribitylamino)uracil + L-tyrosine + S-adenosyl-L-methionine = 5-amino-5-(4-hydroxybenzyl)-6-(D-ribitylimino)-5,6-dihydrouracil + 2-iminoacetate + 5'-deoxyadenosine + L-methionine + H(+). Its pathway is cofactor biosynthesis; coenzyme F0 biosynthesis. Its function is as follows. Catalyzes the radical-mediated synthesis of 5-amino-5-(4-hydroxybenzyl)-6-(D-ribitylimino)-5,6-dihydrouracil from 5-amino-6-(D-ribitylamino)uracil and L-tyrosine. The chain is 5-amino-6-(D-ribitylamino)uracil--L-tyrosine 4-hydroxyphenyl transferase from Trichodesmium erythraeum (strain IMS101).